The chain runs to 331 residues: Ferredoxin--NADP reductase 2 (331 aa).

Residues E37, Q45, Y50, V90, F124, D285, and T326 each coordinate FAD.

It belongs to the ferredoxin--NADP reductase type 2 family. As to quaternary structure, homodimer. The cofactor is FAD.

It carries out the reaction 2 reduced [2Fe-2S]-[ferredoxin] + NADP(+) + H(+) = 2 oxidized [2Fe-2S]-[ferredoxin] + NADPH. This Bacillus velezensis (strain DSM 23117 / BGSC 10A6 / LMG 26770 / FZB42) (Bacillus amyloliquefaciens subsp. plantarum) protein is Ferredoxin--NADP reductase 2.